We begin with the raw amino-acid sequence, 140 residues long: Phosphopantetheine adenylyltransferase (140 aa).

Serine 9 serves as a coordination point for substrate. Residues 9–10 (SF) and histidine 17 each bind ATP. Substrate contacts are provided by lysine 41, threonine 74, and arginine 88. ATP contacts are provided by residues 89–91 (GLR), glutamate 99, and 124–130 (KRSLSST).

The protein belongs to the bacterial CoaD family. As to quaternary structure, homohexamer. Mg(2+) serves as cofactor.

Its subcellular location is the cytoplasm. It carries out the reaction (R)-4'-phosphopantetheine + ATP + H(+) = 3'-dephospho-CoA + diphosphate. Its pathway is cofactor biosynthesis; coenzyme A biosynthesis; CoA from (R)-pantothenate: step 4/5. Reversibly transfers an adenylyl group from ATP to 4'-phosphopantetheine, yielding dephospho-CoA (dPCoA) and pyrophosphate. The polypeptide is Phosphopantetheine adenylyltransferase (Mycoplasma mycoides subsp. mycoides SC (strain CCUG 32753 / NCTC 10114 / PG1)).